The primary structure comprises 479 residues: UDP-N-acetylmuramoylalanine--D-glutamate ligase (479 aa).

ATP is bound at residue G110–S116.

This sequence belongs to the MurCDEF family.

The protein localises to the cytoplasm. The enzyme catalyses UDP-N-acetyl-alpha-D-muramoyl-L-alanine + D-glutamate + ATP = UDP-N-acetyl-alpha-D-muramoyl-L-alanyl-D-glutamate + ADP + phosphate + H(+). It participates in cell wall biogenesis; peptidoglycan biosynthesis. Cell wall formation. Catalyzes the addition of glutamate to the nucleotide precursor UDP-N-acetylmuramoyl-L-alanine (UMA). This chain is UDP-N-acetylmuramoylalanine--D-glutamate ligase, found in Bifidobacterium adolescentis (strain ATCC 15703 / DSM 20083 / NCTC 11814 / E194a).